A 253-amino-acid chain; its full sequence is uncharacterized protein (253 aa).

The disordered stretch occupies residues 211 to 235 (DEPEPAQPTLTVPSAQPVSNRRGKP). Residues 218 to 229 (PTLTVPSAQPVS) show a composition bias toward polar residues.

This is an uncharacterized protein from Mycobacterium tuberculosis (strain CDC 1551 / Oshkosh).